The sequence spans 325 residues: Cln5-like protein 2 (325 aa).

An N-terminal signal peptide occupies residues 1-19 (MNKLIFIIICLGIVDKTIS). N-linked (GlcNAc...) asparagine glycosylation is found at N88, N117, N133, N163, N182, N189, N238, and N262.

The protein belongs to the CLN5 family.

The sequence is that of Cln5-like protein 2 (cln5lb) from Dictyostelium discoideum (Social amoeba).